The chain runs to 180 residues: MKTVYIVAGLFVMLVQGSWQHAPQDTEENARSFPASQTEPLEDPDQINEDKRHSQGTFTSDYSKYLDSRRAQDFVQWLMNTKRNRNNIAKRHDEFERHAEGTFTSDVSSYLEGQAAKEFIAWLVKGRGRRDFPEEVAIAEELGRRHADGSFSDEMNTILDNLATRDFINWLIQTKITDKK.

An N-terminal signal peptide occupies residues 1 to 20 (MKTVYIVAGLFVMLVQGSWQ). The disordered stretch occupies residues 23-59 (PQDTEENARSFPASQTEPLEDPDQINEDKRHSQGTFT). The residue at position 54 (S54) is a Phosphoserine. Residues 84–89 (NRNNIA) constitute a propeptide that is removed on maturation. A phosphoserine mark is found at S105 and S108. The residue at position 127 (R127) is an Arginine amide. The propeptide occupies 131–145 (DFPEEVAIAEELGRR). 2 positions are modified to phosphoserine: S150 and S152.

This sequence belongs to the glucagon family. In terms of processing, proglucagon is post-translationally processed in a tissue-specific manner in pancreatic A cells and intestinal L cells. In pancreatic A cells, the major bioactive hormone is glucagon cleaved by PCSK2/PC2. In the intestinal L cells PCSK1/PC1 liberates GLP-1, GLP-2, glicentin and oxyntomodulin. GLP-1 is further N-terminally truncated by post-translational processing in the intestinal L cells resulting in GLP-1(7-37) GLP-1-(7-36)amide. The C-terminal amidation is neither important for the metabolism of GLP-1 nor for its effects on the endocrine pancreas. In terms of tissue distribution, glucagon is secreted in the A cells of the islets of Langerhans. GLP-1, GLP-2, oxyntomodulin and glicentin are secreted from enteroendocrine cells throughout the gastrointestinal tract.

It is found in the secreted. In terms of biological role, plays a key role in glucose metabolism and homeostasis. Regulates blood glucose by increasing gluconeogenesis and decreasing glycolysis. A counterregulatory hormone of insulin, raises plasma glucose levels in response to insulin-induced hypoglycemia. Plays an important role in initiating and maintaining hyperglycemic conditions in diabetes. Functionally, potent stimulator of glucose-dependent insulin release. Also stimulates insulin release in response to IL6. Plays important roles on gastric motility and the suppression of plasma glucagon levels. May be involved in the suppression of satiety and stimulation of glucose disposal in peripheral tissues, independent of the actions of insulin. Has growth-promoting activities on intestinal epithelium. May also regulate the hypothalamic pituitary axis (HPA) via effects on LH, TSH, CRH, oxytocin, and vasopressin secretion. Increases islet mass through stimulation of islet neogenesis and pancreatic beta cell proliferation. Inhibits beta cell apoptosis. Its function is as follows. Stimulates intestinal growth and up-regulates villus height in the small intestine, concomitant with increased crypt cell proliferation and decreased enterocyte apoptosis. The gastrointestinal tract, from the stomach to the colon is the principal target for GLP-2 action. Plays a key role in nutrient homeostasis, enhancing nutrient assimilation through enhanced gastrointestinal function, as well as increasing nutrient disposal. Stimulates intestinal glucose transport and decreases mucosal permeability. May modulate gastric acid secretion and the gastro-pyloro-duodenal activity. May play an important role in intestinal mucosal growth in the early period of life. In terms of biological role, oxyntomodulin significantly reduces food intake. This is Pro-glucagon (Gcg) from Rattus norvegicus (Rat).